The following is a 260-amino-acid chain: Carbonic anhydrase 3 (260 aa).

A2 bears the N-acetylalanine mark. Residues 3–259 form the Alpha-carbonic anhydrase domain; the sequence is KEWGYASHNG…INNRVVRASF (257 aa). Residues S29, S43, S48, S50, and S55 each carry the phosphoserine modification. An involved in proton transfer region spans residues 64-67; the sequence is KTCR. T73 carries the post-translational modification Phosphothreonine. Zn(2+) contacts are provided by H94, H96, and H119. Y127 is modified (phosphotyrosine). Residues T129 and T176 each carry the phosphothreonine modification. 2 positions are modified to S-glutathionyl cysteine: C182 and C187. 198–199 contributes to the substrate binding site; sequence TT. The residue at position 216 (T216) is a Phosphothreonine. Residue S219 is modified to Phosphoserine.

It belongs to the alpha-carbonic anhydrase family. The cofactor is Zn(2+). Post-translationally, S-thiolated both by thiol-disulfide exchange with glutathione disulfide and by oxyradical-initiated S-thiolation with reduced glutathione. In terms of processing, S-glutathionylated in hepatocytes under oxidative stress. In terms of tissue distribution, muscle specific.

It is found in the cytoplasm. The catalysed reaction is hydrogencarbonate + H(+) = CO2 + H2O. Activated by proton donors such as imidazole and the dipeptide histidylhistidine. Inhibited by coumarins and sulfonamide derivatives such as acetazolamide. Reversible hydration of carbon dioxide. In Homo sapiens (Human), this protein is Carbonic anhydrase 3.